A 673-amino-acid polypeptide reads, in one-letter code: MLNGEKSALGEMPSNSNSSSKLNAKSPNFIPSSSNIPRSSAKTKEHSADRKPHRNSEKKTQGMPRKNQQLASSERKTKNKKRLEKQSSAIADSIGESLDDPQTVYDEHLFDILSARTNKRGQINLNHLLNFQFTPRTNSNAFSAPPRRSRGYNTYGQGSGHHPMDKSRYVNANYRFVVSPIGDYQSQKLDPDSPVKWEDVWQVLCSSDFQLAACPFCLEEKPVAARMSRCGHVYCFSCLLRFVETPTAAEVKAAETSGTKIVKCGHRSCPICWDSIRLRDVHPIRWVEDKEFQKLEEGKSVCLRLYQRNNGSILAFPRSCRSFALDGSFHSDEIPNFTMSGAAYARIIIGSHDYMVQQHLLEIEQLQQIAAEDISLYGSADTYYERITQILLDRISSLSESVNEQNIKSLQTDIDNLCLQSNSLKQLSEVDDLNDVSGSEIADAYLFYQPFAHSHIYLSPLDIRILKSAFGSYENFPDELVPRVERISSGHLVNSELRQRFKYMAHLPEGCEVAFIECDWSKIIPKEVLLTFKSEISKRRKQRKAQEMREERYRQRAERDTEEQIYSELNMQRPVPKTVVHEDPAEAFPTLGSHHQFESTDEVNTDESTLSTAKTVWGTRALANIQNDTDDQDDLDGWKVDWDKVAQLSAPSKNSKNKKKKKLVLLSTGAAHR.

A disordered region spans residues 1–95 (MLNGEKSALG…QSSAIADSIG (95 aa)). Low complexity predominate over residues 13–40 (PSNSNSSSKLNAKSPNFIPSSSNIPRSS). Residues 42-60 (KTKEHSADRKPHRNSEKKT) show a composition bias toward basic and acidic residues. The segment at 214–273 (CPFCLEEKPVAARMSRCGHVYCFSCLLRFVETPTAAEVKAAETSGTKIVKCGHRSCPICW) adopts an RING-type zinc-finger fold. Residues 649–673 (SAPSKNSKNKKKKKLVLLSTGAAHR) are disordered.

It localises to the cytoplasm. The protein localises to the nucleus. This is an uncharacterized protein from Schizosaccharomyces pombe (strain 972 / ATCC 24843) (Fission yeast).